Reading from the N-terminus, the 411-residue chain is 2,3-bisphosphoglycerate-independent phosphoglycerate mutase (411 aa).

The tract at residues 164 to 190 (VSSNDPKKEGVQPLTIRPGSDDPADAK) is disordered.

Belongs to the BPG-independent phosphoglycerate mutase family. A-PGAM subfamily.

The enzyme catalyses (2R)-2-phosphoglycerate = (2R)-3-phosphoglycerate. It participates in carbohydrate degradation; glycolysis; pyruvate from D-glyceraldehyde 3-phosphate: step 3/5. In terms of biological role, catalyzes the interconversion of 2-phosphoglycerate and 3-phosphoglycerate. This is 2,3-bisphosphoglycerate-independent phosphoglycerate mutase from Methanoculleus marisnigri (strain ATCC 35101 / DSM 1498 / JR1).